Reading from the N-terminus, the 263-residue chain is uncharacterized protein (263 aa).

The first 22 residues, 1–22, serve as a signal peptide directing secretion; the sequence is MEYLKRLALFISVIILTIFIMG. Cys-23 carries N-palmitoyl cysteine lipidation. Residue Cys-23 is the site of S-diacylglycerol cysteine attachment.

It belongs to the staphylococcal tandem lipoprotein family.

It localises to the cell membrane. This is an uncharacterized protein from Staphylococcus aureus (strain MSSA476).